The sequence spans 258 residues: Phosphate import ATP-binding protein PstB (258 aa).

One can recognise an ABC transporter domain in the interval 12–253 (LEVKNLNFYY…PARKETEDYI (242 aa)). 44–51 (GPSGCGKS) provides a ligand contact to ATP.

It belongs to the ABC transporter superfamily. Phosphate importer (TC 3.A.1.7) family. The complex is composed of two ATP-binding proteins (PstB), two transmembrane proteins (PstC and PstA) and a solute-binding protein (PstS).

It localises to the cell inner membrane. It carries out the reaction phosphate(out) + ATP + H2O = ADP + 2 phosphate(in) + H(+). Part of the ABC transporter complex PstSACB involved in phosphate import. Responsible for energy coupling to the transport system. This Bordetella pertussis (strain Tohama I / ATCC BAA-589 / NCTC 13251) protein is Phosphate import ATP-binding protein PstB.